The primary structure comprises 435 residues: Histone acetyltransferase ESA1 (435 aa).

The region spanning 22–73 (IIGCKCWVEKDGEQRLAEILSINNRRQPPKFYVHYEDFNKRLDEWILASRIN) is the Tudor-knot domain. Over residues 78 to 89 (VTFPKPRDPDEK) the composition is skewed to basic and acidic residues. The tract at residues 78-108 (VTFPKPRDPDEKKKKKQKKSATPQATDGETL) is disordered. In terms of domain architecture, MYST-type HAT spans 152–423 (SRVRNLSKII…IDPEKLIWKP (272 aa)). The C2HC MYST-type; degenerate zinc-finger motif lies at 185–210 (VYIDDFSLQYFGSKKQYARYRQKCTL). The ESA1-RPD3 motif motif lies at 235–256 (RTWCRNLCLLSKLFLDHKTLYY). Lys252 bears the N6-acetyllysine; by autocatalysis mark. Acetyl-CoA contacts are provided by residues 293–297 (ACILT) and 302–308 (QRMGYGR). The active-site Proton donor/acceptor is Glu328. Ser332 contributes to the acetyl-CoA binding site.

It belongs to the MYST (SAS/MOZ) family. In terms of assembly, component of the NuA4 histone acetyltransferase complex. Interacts with arp4. In terms of processing, autoacetylation at Lys-252 is required for proper function.

It is found in the nucleus. It localises to the chromosome. The catalysed reaction is L-lysyl-[histone] + acetyl-CoA = N(6)-acetyl-L-lysyl-[histone] + CoA + H(+). It carries out the reaction L-lysyl-[protein] + acetyl-CoA = N(6)-acetyl-L-lysyl-[protein] + CoA + H(+). It catalyses the reaction 2-hydroxyisobutanoyl-CoA + L-lysyl-[protein] = N(6)-(2-hydroxyisobutanoyl)-L-lysyl-[protein] + CoA + H(+). The enzyme catalyses (2E)-butenoyl-CoA + L-lysyl-[protein] = N(6)-(2E)-butenoyl-L-lysyl-[protein] + CoA + H(+). Functionally, catalytic component of the NuA4 histone acetyltransferase (HAT) complex which is involved in epigenetic transcriptional activation of selected genes principally by acetylation of nucleosomal histones H4, H3, H2B, H2A and H2A variant H2A.Z. Acetylates histone H4 to form H4K5ac, H4K8ac, H4K12ac and H4K16ac, histone H3 to form H3K14ac, and histone H2A to form H2AK4ac and H2AK7ac. The NuA4 complex is involved in the DNA damage response and is required for chromosome segregation. The NuA4 complex plays a direct role in repair of DNA double-strand breaks (DSBs) through homologous recombination. Recruitment to promoters depends on H3K4me. Also acetylates non-histone proteins. In addition to protein acetyltransferase, can use different acyl-CoA substrates, such as 2-hydroxyisobutanoyl-CoA (2-hydroxyisobutyryl-CoA) or (2E)-butenoyl-CoA (crotonyl-CoA), and is able to mediate protein 2-hydroxyisobutyrylation and crotonylation, respectively. The polypeptide is Histone acetyltransferase ESA1 (ESA1) (Eremothecium gossypii (strain ATCC 10895 / CBS 109.51 / FGSC 9923 / NRRL Y-1056) (Yeast)).